Reading from the N-terminus, the 282-residue chain is Probable methylxanthine N7-demethylase NdmC (282 aa).

The catalysed reaction is 7-methylxanthine + NADPH + O2 + H(+) = xanthine + formaldehyde + NADP(+) + H2O. It catalyses the reaction 7-methylxanthine + NADH + O2 + H(+) = xanthine + formaldehyde + NAD(+) + H2O. In terms of biological role, involved in the caffeine degradation, which is the essential first step for assimilating the carbon and nitrogen in caffeine. Probably catalyzes the N7-demethylation of 7-methylxanthine to produce xanthine and formaldehyde. In Pseudomonas sp. (strain TJI-51), this protein is Probable methylxanthine N7-demethylase NdmC.